We begin with the raw amino-acid sequence, 1194 residues long: Multidrug efflux ATP-binding/permease protein Rv0194 (1194 aa).

The next 6 helical transmembrane spans lie at 20–40 (LLLGFGAALAGTVIAVLVPLV), 56–76 (LAPWAVVLVAAAGATYLLMYV), 130–150 (LLFDVPNVLRHVLTLLLGVAV), 153–173 (WLSVPLALLAVLLVPVIGLIA), 258–278 (FALGGWMAAQGSITVGTFVAF), and 279–299 (WACLTLLARPACDLAGMLTIA). Positions 21–301 (LLGFGAALAG…LAGMLTIAQQ (281 aa)) constitute an ABC transmembrane type-1 1 domain. The 235-residue stretch at 334–568 (LEFQRVSFGY…CPRYRELLSP (235 aa)) folds into the ABC transporter 1 domain. 367–374 (GAPGSGKS) contacts ATP. A run of 6 helical transmembrane segments spans residues 628–648 (ALSLLLVAVQTCAGLLPPLLI), 660–680 (VLSALWWAALAGTATVVIRWV), 743–763 (LVVAVISVVTLVGILVALLAI), 765–785 (ARLVLLIFTTMPVLALATWQF), 847–867 (LLALYYPFVALLCSLATTLVL), and 878–898 (VISVGALVTYLLYIELLYTPI). The ABC transmembrane type-1 2 domain occupies 628–910 (ALSLLLVAVQ…LAQMFDDYQR (283 aa)). An ABC transporter 2 domain is found at 942–1177 (VVFDAVHYSY…GGHYSRLWAA (236 aa)). 976-983 (GSTGSGKS) is an ATP binding site.

This sequence belongs to the ABC transporter superfamily. Lipid exporter (TC 3.A.1.106) family.

It localises to the cell inner membrane. Its activity is regulated as follows. Efflux is inhibited by reserpine. Overexpression in M.smegmatis increases resistance to erythromycin, ampicillin, novobiocin and vancomycin. It also reduces accumulation of ethidium bromide in the cell. This is Multidrug efflux ATP-binding/permease protein Rv0194 from Mycobacterium tuberculosis (strain ATCC 25618 / H37Rv).